The chain runs to 313 residues: Ribosomal RNA small subunit methyltransferase H (313 aa).

Residues 35 to 37 (GGH), D55, F79, D101, and Q108 each bind S-adenosyl-L-methionine.

It belongs to the methyltransferase superfamily. RsmH family.

Its subcellular location is the cytoplasm. It carries out the reaction cytidine(1402) in 16S rRNA + S-adenosyl-L-methionine = N(4)-methylcytidine(1402) in 16S rRNA + S-adenosyl-L-homocysteine + H(+). In terms of biological role, specifically methylates the N4 position of cytidine in position 1402 (C1402) of 16S rRNA. This is Ribosomal RNA small subunit methyltransferase H from Escherichia coli O6:H1 (strain CFT073 / ATCC 700928 / UPEC).